The primary structure comprises 238 residues: Small ribosomal subunit protein eS4 (238 aa).

The 72-residue stretch at 38 to 109 (IPLALVIRDV…DERSYYALVP (72 aa)) folds into the S4 RNA-binding domain.

This sequence belongs to the eukaryotic ribosomal protein eS4 family.

The protein is Small ribosomal subunit protein eS4 of Pyrobaculum neutrophilum (strain DSM 2338 / JCM 9278 / NBRC 100436 / V24Sta) (Thermoproteus neutrophilus).